Here is a 609-residue protein sequence, read N- to C-terminus: Tyrosyl-DNA phosphodiesterase 1 (609 aa).

The span at 1–12 (MSQESSYGKWTI) shows a compositional bias: polar residues. Positions 1-155 (MSQESSYGKW…YETSGEGQDI (155 aa)) are disordered. The residue at position 61 (serine 61) is a Phosphoserine. Over residues 105–118 (QPKRVLPQEKKHVS) the composition is skewed to basic and acidic residues. Serine 119 and serine 132 each carry phosphoserine. Threonine 148 is subject to Phosphothreonine. Position 149 is a phosphoserine (serine 149). The Nucleophile role is filled by histidine 264. Residue lysine 266 coordinates substrate. The tract at residues 401-404 (SIGS) is interaction with DNA. The active-site Proton donor/acceptor is the histidine 494. Lysine 496 contributes to the substrate binding site.

This sequence belongs to the tyrosyl-DNA phosphodiesterase family. As to quaternary structure, monomer. Ubiquitous.

It is found in the nucleus. The protein resides in the cytoplasm. DNA repair enzyme that can remove a variety of covalent adducts from DNA through hydrolysis of a 3'-phosphodiester bond, giving rise to DNA with a free 3' phosphate. Catalyzes the hydrolysis of dead-end complexes between DNA and the topoisomerase I active site tyrosine residue. Hydrolyzes 3'-phosphoglycolates on protruding 3' ends on DNA double-strand breaks due to DNA damage by radiation and free radicals. Acts on blunt-ended double-strand DNA breaks and on single-stranded DNA. Has low 3'exonuclease activity and can remove a single nucleoside from the 3'end of DNA and RNA molecules with 3'hydroxyl groups. Has no exonuclease activity towards DNA or RNA with a 3'phosphate. This is Tyrosyl-DNA phosphodiesterase 1 (Tdp1) from Mus musculus (Mouse).